Reading from the N-terminus, the 101-residue chain is Large ribosomal subunit protein bL9m (101 aa).

The N-terminal 32 residues, 1 to 32 (MSIMKPTTRFFRFNSLELAVSPFQRIYGQLRF), are a transit peptide targeting the mitochondrion.

Belongs to the bacterial ribosomal protein bL9 family. In terms of assembly, component of the mitochondrial large ribosomal subunit (mt-LSU). Mature yeast 74S mitochondrial ribosomes consist of a small (37S) and a large (54S) subunit. The 37S small subunit contains a 15S ribosomal RNA (15S mt-rRNA) and at least 32 different proteins. The 54S large subunit contains a 21S rRNA (21S mt-rRNA) and at least 45 different proteins.

The protein resides in the mitochondrion. Its function is as follows. Component of the mitochondrial ribosome (mitoribosome), a dedicated translation machinery responsible for the synthesis of mitochondrial genome-encoded proteins, including at least some of the essential transmembrane subunits of the mitochondrial respiratory chain. The mitoribosomes are attached to the mitochondrial inner membrane and translation products are cotranslationally integrated into the membrane. In Schizosaccharomyces pombe (strain 972 / ATCC 24843) (Fission yeast), this protein is Large ribosomal subunit protein bL9m.